Consider the following 366-residue polypeptide: Ribosomal RNA large subunit methyltransferase M (366 aa).

Residues Ser-188, 221 to 224 (CPGG), Asp-240, Asp-260, and Asp-277 each bind S-adenosyl-L-methionine. The active-site Proton acceptor is the Lys-306.

This sequence belongs to the class I-like SAM-binding methyltransferase superfamily. RNA methyltransferase RlmE family. RlmM subfamily. In terms of assembly, monomer.

It localises to the cytoplasm. It carries out the reaction cytidine(2498) in 23S rRNA + S-adenosyl-L-methionine = 2'-O-methylcytidine(2498) in 23S rRNA + S-adenosyl-L-homocysteine + H(+). Its function is as follows. Catalyzes the 2'-O-methylation at nucleotide C2498 in 23S rRNA. The chain is Ribosomal RNA large subunit methyltransferase M from Escherichia coli O127:H6 (strain E2348/69 / EPEC).